The sequence spans 186 residues: Elongation factor P (186 aa).

It belongs to the elongation factor P family.

The protein resides in the cytoplasm. Its pathway is protein biosynthesis; polypeptide chain elongation. Functionally, involved in peptide bond synthesis. Stimulates efficient translation and peptide-bond synthesis on native or reconstituted 70S ribosomes in vitro. Probably functions indirectly by altering the affinity of the ribosome for aminoacyl-tRNA, thus increasing their reactivity as acceptors for peptidyl transferase. The chain is Elongation factor P from Prochlorococcus marinus (strain MIT 9211).